Here is a 295-residue protein sequence, read N- to C-terminus: Light-independent protochlorophyllide reductase iron-sulfur ATP-binding protein (295 aa).

ATP contacts are provided by residues 39 to 44 and Lys-68; that span reads GIGKST. Ser-43 serves as a coordination point for Mg(2+). 2 residues coordinate [4Fe-4S] cluster: Cys-124 and Cys-158. Residues 209-210 and 233-235 contribute to the ATP site; these read NR and PDL.

This sequence belongs to the NifH/BchL/ChlL family. As to quaternary structure, homodimer. Protochlorophyllide reductase is composed of three subunits; BchL, BchN and BchB. The cofactor is [4Fe-4S] cluster.

The enzyme catalyses chlorophyllide a + oxidized 2[4Fe-4S]-[ferredoxin] + 2 ADP + 2 phosphate = protochlorophyllide a + reduced 2[4Fe-4S]-[ferredoxin] + 2 ATP + 2 H2O. It participates in porphyrin-containing compound metabolism; bacteriochlorophyll biosynthesis (light-independent). Component of the dark-operative protochlorophyllide reductase (DPOR) that uses Mg-ATP and reduced ferredoxin to reduce ring D of protochlorophyllide (Pchlide) to form chlorophyllide a (Chlide). This reaction is light-independent. The L component serves as a unique electron donor to the NB-component of the complex, and binds Mg-ATP. The polypeptide is Light-independent protochlorophyllide reductase iron-sulfur ATP-binding protein (Rhodospirillum rubrum (strain ATCC 11170 / ATH 1.1.1 / DSM 467 / LMG 4362 / NCIMB 8255 / S1)).